The sequence spans 113 residues: MKGLNYMLCIPHTSVSRSMLEAQCRRLINNIPGWELIRVENMMRLRCTFTFPDFREALAFTNSVGELAEAEQHHPELITEWGKVTVTWWTHSVKGVHMNDFIMAARTGVVANI.

The protein belongs to the pterin-4-alpha-carbinolamine dehydratase family.

It catalyses the reaction (4aS,6R)-4a-hydroxy-L-erythro-5,6,7,8-tetrahydrobiopterin = (6R)-L-erythro-6,7-dihydrobiopterin + H2O. The protein is Putative pterin-4-alpha-carbinolamine dehydratase of Pelodictyon phaeoclathratiforme (strain DSM 5477 / BU-1).